The chain runs to 247 residues: Cationic trypsin-3 (247 aa).

The signal sequence occupies residues 1–15 (MKALIFLAFLGAAVA). The propeptide at 16-24 (LPLDDDDDK) is activation peptide. Positions 25–245 (IVGGYTCQKN…YVNWIQQTVA (221 aa)) constitute a Peptidase S1 domain. Cystine bridges form between cysteine 31–cysteine 161, cysteine 49–cysteine 65, cysteine 133–cysteine 234, cysteine 140–cysteine 207, cysteine 172–cysteine 186, and cysteine 197–cysteine 221. The active-site Charge relay system is histidine 64. Ca(2+) contacts are provided by glutamate 76, asparagine 78, valine 81, and glutamate 86. Catalysis depends on aspartate 108, which acts as the Charge relay system. Serine 201 serves as the catalytic Charge relay system.

Belongs to the peptidase S1 family. Ca(2+) is required as a cofactor.

Its subcellular location is the secreted. The protein resides in the extracellular space. It catalyses the reaction Preferential cleavage: Arg-|-Xaa, Lys-|-Xaa.. The sequence is that of Cationic trypsin-3 (Try3) from Rattus norvegicus (Rat).